A 340-amino-acid polypeptide reads, in one-letter code: UDP-3-O-(3-hydroxymyristoyl)glucosamine N-acyltransferase (340 aa).

Residue His239 is the Proton acceptor of the active site.

It belongs to the transferase hexapeptide repeat family. LpxD subfamily. In terms of assembly, homotrimer.

The catalysed reaction is a UDP-3-O-[(3R)-3-hydroxyacyl]-alpha-D-glucosamine + a (3R)-hydroxyacyl-[ACP] = a UDP-2-N,3-O-bis[(3R)-3-hydroxyacyl]-alpha-D-glucosamine + holo-[ACP] + H(+). The enzyme catalyses UDP-3-O-[(3R)-3-hydroxytetradecanoyl]-alpha-D-glucosamine + (3R)-hydroxytetradecanoyl-[ACP] = UDP-2-N,3-O-bis[(3R)-3-hydroxytetradecanoyl]-alpha-D-glucosamine + holo-[ACP] + H(+). It participates in glycolipid biosynthesis; lipid IV(A) biosynthesis; lipid IV(A) from (3R)-3-hydroxytetradecanoyl-[acyl-carrier-protein] and UDP-N-acetyl-alpha-D-glucosamine: step 3/6. In terms of biological role, catalyzes the N-acylation of UDP-3-O-(hydroxytetradecanoyl)glucosamine using 3-hydroxytetradecanoyl-ACP as the acyl donor. Is involved in the biosynthesis of lipid A, a phosphorylated glycolipid that anchors the lipopolysaccharide to the outer membrane of the cell. The polypeptide is UDP-3-O-(3-hydroxymyristoyl)glucosamine N-acyltransferase (Yersinia enterocolitica).